Reading from the N-terminus, the 219-residue chain is Protein ERP1 (219 aa).

The signal sequence occupies residues 1 to 22 (MLLTSLLQVFACCLVLPAQVTA). Topologically, residues 23-186 (FYYYTSGAER…RDASEAVNSR (164 aa)) are lumenal. One can recognise a GOLD domain in the interval 32-131 (RKCFHKELSK…KTKIDVEFQV (100 aa)). A helical transmembrane segment spans residues 187-207 (AMWWIVIQLIVLAVTCGWQMK). The Cytoplasmic portion of the chain corresponds to 208–219 (HLGKFFVKQKIL).

Belongs to the EMP24/GP25L family. Associates with EMP24, ERV25 and ERP2.

The protein localises to the endoplasmic reticulum membrane. Its function is as follows. Involved in vesicular protein trafficking. The polypeptide is Protein ERP1 (ERP1) (Saccharomyces cerevisiae (strain ATCC 204508 / S288c) (Baker's yeast)).